A 170-amino-acid chain; its full sequence is Large ribosomal subunit protein uL10 (170 aa).

Belongs to the universal ribosomal protein uL10 family. As to quaternary structure, part of the ribosomal stalk of the 50S ribosomal subunit. The N-terminus interacts with L11 and the large rRNA to form the base of the stalk. The C-terminus forms an elongated spine to which L12 dimers bind in a sequential fashion forming a multimeric L10(L12)X complex.

Functionally, forms part of the ribosomal stalk, playing a central role in the interaction of the ribosome with GTP-bound translation factors. This chain is Large ribosomal subunit protein uL10, found in Lactobacillus helveticus (strain DPC 4571).